A 360-amino-acid chain; its full sequence is Cytoplasmic envelopment protein 2 (360 aa).

It belongs to the herpesviridae cytoplasmic envelopment protein 2 family. In terms of assembly, interacts with cytoplasmic envelopment protein 3 and with the capsid.

Its subcellular location is the virion tegument. The protein localises to the host cytoplasm. The protein resides in the host nucleus. In terms of biological role, plays a critical role in cytoplasmic virus egress. Participates in the final step of tegumentation and envelope acquisition within the host cytoplasm by directly interacting with the capsid. Upon virion binding to target cell, a signaling cascade is triggered to disrupt the interaction with the capsid, thereby preparing capsid uncoating. The polypeptide is Cytoplasmic envelopment protein 2 (MDV028) (Gallus gallus (Chicken)).